The following is a 150-amino-acid chain: Transcription antitermination protein NusB (150 aa).

It belongs to the NusB family.

Involved in transcription antitermination. Required for transcription of ribosomal RNA (rRNA) genes. Binds specifically to the boxA antiterminator sequence of the ribosomal RNA (rrn) operons. This chain is Transcription antitermination protein NusB, found in Streptococcus pyogenes serotype M6 (strain ATCC BAA-946 / MGAS10394).